We begin with the raw amino-acid sequence, 190 residues long: Inner membrane-spanning protein YciB (190 aa).

Helical transmembrane passes span Ile-22 to Ala-42, Met-50 to Asp-70, Trp-76 to Gly-96, Ile-118 to Phe-138, and Phe-148 to Ile-168.

It belongs to the YciB family.

The protein localises to the cell inner membrane. Functionally, plays a role in cell envelope biogenesis, maintenance of cell envelope integrity and membrane homeostasis. This Vibrio campbellii (strain ATCC BAA-1116) protein is Inner membrane-spanning protein YciB.